A 333-amino-acid chain; its full sequence is NADH dehydrogenase (ubiquinone) complex I, assembly factor 6 (333 aa).

The N-terminal 44 residues, 1–44, are a transit peptide targeting the mitochondrion; it reads MAASAHGSVWGPLRLGIPGLCCRRPPLGLYARMRRLPGPEVSGR.

The protein belongs to the NDUFAF6 family. Widely expressed. A lower expression is observed in lung and kidney compared to heart, muscle and liver. In the kidney, expression is high in the basal zone of the proximal tubular cells.

Its subcellular location is the mitochondrion inner membrane. The protein resides in the cytoplasm. It is found in the nucleus. Functionally, involved in the assembly of mitochondrial NADH:ubiquinone oxidoreductase complex (complex I) at early stages. May play a role in the biogenesis of complex I subunit MT-ND1. This Homo sapiens (Human) protein is NADH dehydrogenase (ubiquinone) complex I, assembly factor 6 (NDUFAF6).